Consider the following 419-residue polypeptide: Tyrosine--tRNA ligase (419 aa).

L-tyrosine is bound at residue Y34. Positions 39-48 match the 'HIGH' region motif; it reads PTADSLHIGN. Residues Y169 and Q173 each coordinate L-tyrosine. Residues 230-234 carry the 'KMSKS' region motif; the sequence is KFGKT. Position 233 (K233) interacts with ATP. Positions 352–419 constitute an S4 RNA-binding domain; it reads VPLVELLVSA…KKKYYLIRYA (68 aa).

Belongs to the class-I aminoacyl-tRNA synthetase family. TyrS type 1 subfamily. In terms of assembly, homodimer.

The protein localises to the cytoplasm. It catalyses the reaction tRNA(Tyr) + L-tyrosine + ATP = L-tyrosyl-tRNA(Tyr) + AMP + diphosphate + H(+). Catalyzes the attachment of tyrosine to tRNA(Tyr) in a two-step reaction: tyrosine is first activated by ATP to form Tyr-AMP and then transferred to the acceptor end of tRNA(Tyr). In Bacillus caldotenax, this protein is Tyrosine--tRNA ligase.